A 177-amino-acid polypeptide reads, in one-letter code: Nucleoside triphosphate/diphosphate phosphatase (177 aa).

Arg-23 functions as the Proton donor in the catalytic mechanism. The Mg(2+) site is built by Asn-87, Asp-103, Asp-105, Asp-107, Asp-120, and Glu-123.

It belongs to the Ntdp family. It depends on Mg(2+) as a cofactor.

The catalysed reaction is a ribonucleoside 5'-triphosphate + H2O = a ribonucleoside 5'-diphosphate + phosphate + H(+). It carries out the reaction a ribonucleoside 5'-diphosphate + H2O = a ribonucleoside 5'-phosphate + phosphate + H(+). Functionally, has nucleoside phosphatase activity towards nucleoside triphosphates and nucleoside diphosphates. The protein is Nucleoside triphosphate/diphosphate phosphatase of Streptococcus thermophilus (strain ATCC BAA-491 / LMD-9).